Here is a 337-residue protein sequence, read N- to C-terminus: Dihydroorotate dehydrogenase (quinone) (337 aa).

Residues Ala-58–Lys-62 and Thr-82 contribute to the FMN site. Lys-62 is a substrate binding site. A substrate-binding site is contributed by Asn-107–Phe-111. FMN contacts are provided by Asn-137 and Asn-170. Asn-170 lines the substrate pocket. Ser-173 (nucleophile) is an active-site residue. Asn-175 contributes to the substrate binding site. Lys-215 and Thr-243 together coordinate FMN. Asn-244 to Thr-245 serves as a coordination point for substrate. Residues Gly-266, Gly-294, and Tyr-315 to Ser-316 each bind FMN.

The protein belongs to the dihydroorotate dehydrogenase family. Type 2 subfamily. In terms of assembly, monomer. Requires FMN as cofactor.

The protein localises to the cell membrane. It carries out the reaction (S)-dihydroorotate + a quinone = orotate + a quinol. It functions in the pathway pyrimidine metabolism; UMP biosynthesis via de novo pathway; orotate from (S)-dihydroorotate (quinone route): step 1/1. Its function is as follows. Catalyzes the conversion of dihydroorotate to orotate with quinone as electron acceptor. This is Dihydroorotate dehydrogenase (quinone) from Dichelobacter nodosus (strain VCS1703A).